The chain runs to 327 residues: Fructose import binding protein FruE (327 aa).

The N-terminal stretch at 1–22 (MKNWKKAIALVASAAALVSVAA) is a signal peptide. Cys-23 carries the N-palmitoyl cysteine lipid modification. Cys-23 carries the S-diacylglycerol cysteine lipid modification.

Belongs to the bacterial solute-binding protein 2 family. As to quaternary structure, the complex is composed of an ATP-binding protein (FruK), two transmembrane proteins (FruF and FruG) and a solute-binding protein (FruE).

The protein localises to the cell membrane. Its function is as follows. Part of the high-affinity ABC transporter complex FruEKFG involved in fructose uptake. Can also transport ribose and xylose, with lower affinity. Binds fructose, ribose and xylose, with fructose as the preferred substrate. This Bifidobacterium longum (strain NCC 2705) protein is Fructose import binding protein FruE.